The following is a 392-amino-acid chain: Bifunctional enzyme Fae/Hps (392 aa).

Residues 1-161 are formaldehyde-activating enzyme; the sequence is MFQIGEALMG…EESNKSTHAI (161 aa). His-17 acts as the Proton donor in catalysis. 5 residues coordinate substrate: Asp-19, Leu-48, Lys-66, Thr-68, and Gln-83. The tract at residues 162-392 is 3-hexulose-6-phosphate synthase; the sequence is MGFKVTRLWD…IDQFRVMTDF (231 aa).

In the N-terminal section; belongs to the formaldehyde-activating enzyme family. This sequence in the C-terminal section; belongs to the HPS/KGPDC family. HPS subfamily.

The catalysed reaction is 5,6,7,8-tetrahydromethanopterin + formaldehyde = 5,10-methylenetetrahydromethanopterin + H2O. The enzyme catalyses D-ribulose 5-phosphate + formaldehyde = D-arabino-hex-3-ulose 6-phosphate. Its pathway is carbohydrate biosynthesis; D-ribose 5-phosphate biosynthesis. Catalyzes the condensation of formaldehyde with tetrahydromethanopterin (H(4)MPT) to 5,10-methylenetetrahydromethanopterin. Functionally, catalyzes the reversible formation of ribulose-5-phosphate and formaldehyde from 3-hexulose-6-phosphate. This is Bifunctional enzyme Fae/Hps from Methanosarcina acetivorans (strain ATCC 35395 / DSM 2834 / JCM 12185 / C2A).